Here is a 1247-residue protein sequence, read N- to C-terminus: DNA-directed RNA polymerase subunit beta (1247 aa).

It belongs to the RNA polymerase beta chain family. As to quaternary structure, in plastids the minimal PEP RNA polymerase catalytic core is composed of four subunits: alpha, beta, beta', and beta''. When a (nuclear-encoded) sigma factor is associated with the core the holoenzyme is formed, which can initiate transcription.

The protein resides in the plastid. The enzyme catalyses RNA(n) + a ribonucleoside 5'-triphosphate = RNA(n+1) + diphosphate. In terms of biological role, DNA-dependent RNA polymerase catalyzes the transcription of DNA into RNA using the four ribonucleoside triphosphates as substrates. This is DNA-directed RNA polymerase subunit beta (rpoB) from Helicosporidium sp. subsp. Simulium jonesii (Green alga).